The chain runs to 200 residues: Glycerol-3-phosphate acyltransferase (200 aa).

5 consecutive transmembrane segments (helical) span residues 1 to 21, 51 to 71, 84 to 104, 116 to 136, and 159 to 179; these read MITV…FAVV, VAAA…VVVA, VIAS…FLAF, ILLG…IIVA, and FLLQ…LLIL.

Belongs to the PlsY family. Probably interacts with PlsX.

It is found in the cell inner membrane. The enzyme catalyses an acyl phosphate + sn-glycerol 3-phosphate = a 1-acyl-sn-glycero-3-phosphate + phosphate. The protein operates within lipid metabolism; phospholipid metabolism. Its function is as follows. Catalyzes the transfer of an acyl group from acyl-phosphate (acyl-PO(4)) to glycerol-3-phosphate (G3P) to form lysophosphatidic acid (LPA). This enzyme utilizes acyl-phosphate as fatty acyl donor, but not acyl-CoA or acyl-ACP. The sequence is that of Glycerol-3-phosphate acyltransferase from Nitrosomonas eutropha (strain DSM 101675 / C91 / Nm57).